The sequence spans 825 residues: Endochitinase A1 (825 aa).

Positions 1–22 (MVSSKLSFVATAVAALAPLASA) are cleaved as a signal peptide. In terms of domain architecture, GH18 spans 29-338 (SNLAIYWGQG…DHMKDILLHC (310 aa)). Glu174 acts as the Proton donor in catalysis. 3 disordered regions span residues 338-568 (CDPS…TTTA), 680-736 (PVTE…VSTS), and 750-792 (PLIL…YTQE). The segment covering 344 to 554 (VTSSSAVPSS…STDESSTTVG (211 aa)) has biased composition (low complexity). An N-linked (GlcNAc...) asparagine glycan is attached at Asn559. The span at 701–712 (EGSNPTQPSGAS) shows a compositional bias: polar residues. An N-linked (GlcNAc...) asparagine glycan is attached at Asn717. Over residues 772–792 (PSGQNSGSSSHVPIPPSYTQE) the composition is skewed to polar residues. Gly800 is lipidated: GPI-anchor amidated glycine. A propeptide spans 801 to 825 (AASRVTGLGHGLVLTVLTLSAFFVL) (removed in mature form).

The protein belongs to the glycosyl hydrolase 18 family. Chitinase class III subfamily. Post-translationally, O-mannosylated by pmt4.

It is found in the cell membrane. The protein resides in the secreted. It localises to the cell wall. It carries out the reaction Random endo-hydrolysis of N-acetyl-beta-D-glucosaminide (1-&gt;4)-beta-linkages in chitin and chitodextrins.. With respect to regulation, the cyclic peptide natural product argifin acts as a specific inhibitor. Its function is as follows. GPI-anchored chitinase involved in the degradation of chitin, a component of the cell walls of fungi and exoskeletal elements of some animals (including worms and arthropods). Required to reshape the cell wall at the sites where cell wall remodeling and/or cell wall maturation actively take place such as sites of conidia formation. The polypeptide is Endochitinase A1 (chiA1) (Aspergillus fumigatus (Neosartorya fumigata)).